A 90-amino-acid chain; its full sequence is MSKKTFEELFTELQHKAANGDPATSRTAELVDKGVHAIGKKVVEEAAEVWMAAEYEGKDAAAEEISQLLYHVQVMMVARGISLDDVYAHL.

It belongs to the PRA-PH family.

It is found in the cytoplasm. It catalyses the reaction 1-(5-phospho-beta-D-ribosyl)-ATP + H2O = 1-(5-phospho-beta-D-ribosyl)-5'-AMP + diphosphate + H(+). The protein operates within amino-acid biosynthesis; L-histidine biosynthesis; L-histidine from 5-phospho-alpha-D-ribose 1-diphosphate: step 2/9. The protein is Phosphoribosyl-ATP pyrophosphatase (hisE) of Streptomyces coelicolor (strain ATCC BAA-471 / A3(2) / M145).